The primary structure comprises 348 residues: Rhodopsin (348 aa).

Met-1 is subject to N-acetylmethionine. Topologically, residues 1 to 36 are extracellular; the sequence is MNGTEGPNFYVPFSNKTGVVRSPFEYPQYYLAEPWQ. Asn-2 and Asn-15 each carry an N-linked (GlcNAc...) asparagine glycan. A helical transmembrane segment spans residues 37 to 61; that stretch reads FSMLAAYMFLLIVLGFPINFLTLYV. Over 62–73 the chain is Cytoplasmic; sequence TVQHKKLRTPLN. The helical transmembrane segment at 74 to 96 threads the bilayer; that stretch reads YILLNLAVADLFMVFGGFTTTLY. Over 97 to 110 the chain is Extracellular; that stretch reads TSLHGYFVFGPTGC. An intrachain disulfide couples Cys-110 to Cys-187. A helical transmembrane segment spans residues 111 to 133; it reads NVEGFFATLGGEIALWSLVVLAI. The 'Ionic lock' involved in activated form stabilization motif lies at 134-136; sequence ERY. Over 134-152 the chain is Cytoplasmic; sequence ERYVVVCKPMSNFRFGENH. Residues 153–173 traverse the membrane as a helical segment; it reads AIMGVAFTWVMALACAAPPLA. At 174 to 202 the chain is on the extracellular side; it reads GWSRYIPEGMQCSCGIDYYTLKPEINNES. Position 201 (Glu-201) interacts with Zn(2+). A helical transmembrane segment spans residues 203–224; sequence FVIYMFVVHFAIPMIVIFFCYG. The Cytoplasmic segment spans residues 225-252; it reads QLVFTVKEAAAQQQESATTQKAEKEVTR. Residues 253-274 form a helical membrane-spanning segment; the sequence is MVIIMVIAFLICWVPYASVAFY. Residues 275–286 lie on the Extracellular side of the membrane; the sequence is IFTHQGSDFGPI. Gln-279 is a binding site for Zn(2+). Residues 287 to 308 traverse the membrane as a helical segment; it reads FMTLPAFFAKSSSIYNPVIYIM. Position 296 is an N6-(retinylidene)lysine (Lys-296). Residues 309–348 lie on the Cytoplasmic side of the membrane; sequence MNKQFRNCMITTLCCGKNPLGDDEASASASKTETSQVAPA. S-palmitoyl cysteine attachment occurs at residues Cys-322 and Cys-323. Positions 330–348 are interaction with SAG; it reads DDEASASASKTETSQVAPA. Residues Ser-334 and Ser-338 each carry the phosphoserine modification. Phosphothreonine occurs at positions 340 and 342. Position 343 is a phosphoserine (Ser-343).

It belongs to the G-protein coupled receptor 1 family. Opsin subfamily. In terms of assembly, homodimer. May form a complex composed of RHO, GRK1 and RCVRN in a Ca(2+)-dependent manner; RCVRN prevents the interaction between GRK1 and RHO. Interacts with GRK1. Interacts (phosphorylated form) with SAG. Interacts with GNAT1. Interacts with GNAT3. SAG and G-proteins compete for a common binding site. Interacts with PRCD; the interaction promotes PRCD stability. Forms a complex with ASAP1 and ARF4. Forms a complex with ASAP1, RAB11A, Rabin8/RAB3IP, ARF4 and RAB11FIP3; the complex regulates Golgi-to-cilia rhodopsin/RHO transport in photoreceptors. Phosphorylated on some or all of the serine and threonine residues present in the C-terminal region. In terms of processing, contains one covalently linked retinal chromophore. Upon light absorption, the covalently bound 11-cis-retinal is converted to all-trans-retinal. After hydrolysis of the Schiff base and release of the covalently bound all-trans-retinal, active rhodopsin is regenerated by binding of a fresh molecule of 11-cis-retinal.

The protein localises to the membrane. It localises to the cell projection. It is found in the cilium. The protein resides in the photoreceptor outer segment. Photoreceptor required for image-forming vision at low light intensity. Required for photoreceptor cell viability after birth. Light-induced isomerization of 11-cis to all-trans retinal triggers a conformational change that activates signaling via G-proteins. Subsequent receptor phosphorylation mediates displacement of the bound G-protein alpha subunit by the arrestin SAG and terminates signaling. The protein is Rhodopsin (RHO) of Canis lupus familiaris (Dog).